Reading from the N-terminus, the 245-residue chain is Dehydrogenase/reductase SDR family member 6 (245 aa).

Residues 16–18 (QGI), aspartate 37, and aspartate 58 each bind NAD(+). Arginine 144 serves as a coordination point for substrate. Catalysis depends on tyrosine 147, which acts as the Proton acceptor. NAD(+)-binding positions include lysine 151 and 180-184 (VDTPS). Substrate is bound by residues arginine 188 and arginine 205.

This sequence belongs to the short-chain dehydrogenases/reductases (SDR) family. In terms of assembly, homotetramer.

The protein localises to the cytoplasm. It carries out the reaction cis-4-hydroxy-L-proline + NAD(+) = 4-oxo-L-proline + NADH + H(+). The catalysed reaction is (R)-3-hydroxybutanoate + NAD(+) = acetoacetate + NADH + H(+). Its pathway is amino-acid metabolism. It participates in siderophore biosynthesis. NAD(H)-dependent dehydrogenase/reductase with a preference for cyclic substrates. Catalyzes stereoselective conversion of 4-oxo-L-proline to cis-4-hydroxy-L-proline, likely a detoxification mechanism for ketoprolines. Mediates the formation of 2,5-dihydroxybenzoate (2,5-DHBA), a siderophore that chelates free cytoplasmic iron, thereby regulating iron transport and homeostasis while protecting cells against free radical-induced oxidative stress. The iron-siderophore complex is imported into mitochondria, providing an iron source for mitochondrial metabolic processes in particular heme synthesis. May act as a 3-hydroxybutyrate dehydrogenase. The chain is Dehydrogenase/reductase SDR family member 6 (bdh2) from Danio rerio (Zebrafish).